We begin with the raw amino-acid sequence, 819 residues long: ATP-dependent DNA helicase PIF4 (819 aa).

A mitochondrion-targeting transit peptide spans 1-84 (MLLNSTRTLL…RQASSAGHND (84 aa)). The disordered stretch occupies residues 76–101 (QASSAGHNDLGLQEKEKSSGDESAFS). Residue 126 to 133 (GGAGVGKS) coordinates ATP. The DNA-binding element occupies 734–754 (HIIYVAASRVKKFSQLRMINV).

Belongs to the helicase family. PIF1 subfamily. Monomer. Mg(2+) serves as cofactor.

It is found in the mitochondrion matrix. The protein localises to the kinetoplast. The catalysed reaction is Couples ATP hydrolysis with the unwinding of duplex DNA at the replication fork by translocating in the 5'-3' direction. This creates two antiparallel DNA single strands (ssDNA). The leading ssDNA polymer is the template for DNA polymerase III holoenzyme which synthesizes a continuous strand.. It catalyses the reaction ATP + H2O = ADP + phosphate + H(+). In terms of biological role, DNA-dependent ATPase and 5'-3' DNA helicase required for the maintenance of mitochondrial (kinetoplast) genome stability. The chain is ATP-dependent DNA helicase PIF4 from Trypanosoma brucei brucei (strain 927/4 GUTat10.1).